The sequence spans 380 residues: Putative 8-amino-7-oxononanoate synthase (380 aa).

Arg18 contributes to the substrate binding site. 106 to 107 serves as a coordination point for pyridoxal 5'-phosphate; it reads GY. A substrate-binding site is contributed by His131. Residues Ser179, 205–208, and 236–239 each bind pyridoxal 5'-phosphate; these read DEAH and TFGK. Lys239 is subject to N6-(pyridoxal phosphate)lysine. Thr352 provides a ligand contact to substrate.

It belongs to the class-II pyridoxal-phosphate-dependent aminotransferase family. BioF subfamily. In terms of assembly, homodimer. Pyridoxal 5'-phosphate is required as a cofactor.

The catalysed reaction is 6-carboxyhexanoyl-[ACP] + L-alanine + H(+) = (8S)-8-amino-7-oxononanoate + holo-[ACP] + CO2. The protein operates within cofactor biosynthesis; biotin biosynthesis. Its function is as follows. Catalyzes the decarboxylative condensation of pimeloyl-[acyl-carrier protein] and L-alanine to produce 8-amino-7-oxononanoate (AON), [acyl-carrier protein], and carbon dioxide. The protein is Putative 8-amino-7-oxononanoate synthase (bioF) of Neisseria gonorrhoeae (strain ATCC 700825 / FA 1090).